The following is a 162-amino-acid chain: NAD(P)H-quinone oxidoreductase subunit N (162 aa).

It belongs to the complex I NdhN subunit family. In terms of assembly, NDH-1 can be composed of about 15 different subunits; different subcomplexes with different compositions have been identified which probably have different functions.

It is found in the cellular thylakoid membrane. The enzyme catalyses a plastoquinone + NADH + (n+1) H(+)(in) = a plastoquinol + NAD(+) + n H(+)(out). It carries out the reaction a plastoquinone + NADPH + (n+1) H(+)(in) = a plastoquinol + NADP(+) + n H(+)(out). In terms of biological role, NDH-1 shuttles electrons from an unknown electron donor, via FMN and iron-sulfur (Fe-S) centers, to quinones in the respiratory and/or the photosynthetic chain. The immediate electron acceptor for the enzyme in this species is believed to be plastoquinone. Couples the redox reaction to proton translocation, and thus conserves the redox energy in a proton gradient. Cyanobacterial NDH-1 also plays a role in inorganic carbon-concentration. This Nostoc sp. (strain PCC 7120 / SAG 25.82 / UTEX 2576) protein is NAD(P)H-quinone oxidoreductase subunit N.